The sequence spans 499 residues: Histidine ammonia-lyase (499 aa).

The 5-imidazolinone (Ala-Gly) cross-link spans 142–144 (ASG). 2,3-didehydroalanine (Ser) is present on Ser-143.

It belongs to the PAL/histidase family. In terms of processing, contains an active site 4-methylidene-imidazol-5-one (MIO), which is formed autocatalytically by cyclization and dehydration of residues Ala-Ser-Gly.

The protein resides in the cytoplasm. The catalysed reaction is L-histidine = trans-urocanate + NH4(+). The protein operates within amino-acid degradation; L-histidine degradation into L-glutamate; N-formimidoyl-L-glutamate from L-histidine: step 1/3. This Staphylococcus saprophyticus subsp. saprophyticus (strain ATCC 15305 / DSM 20229 / NCIMB 8711 / NCTC 7292 / S-41) protein is Histidine ammonia-lyase.